A 100-amino-acid chain; its full sequence is Omega toxin Ap2 (100 aa).

Residues 1 to 22 (MNTTQVILFAVVLVLTVTVGQA) form the signal peptide. A propeptide spanning residues 23 to 57 (DEDSAETSLLRKLEEAEASMFGQYLEESKNSPEQR) is cleaved from the precursor. Disulfide bonds link Cys58–Cys74, Cys65–Cys79, and Cys73–Cys94. Serine amide is present on Ser99.

The protein belongs to the neurotoxin 14 (magi-1) family. 08 (Ltx-4) subfamily. Expressed by the venom duct.

It is found in the secreted. Inhibits 31.17% of Cav2.1/CACNA1A current at 1 uM concentration. This is Omega toxin Ap2 from Acanthoscurria paulensis (Brazilian giant black tarantula spider).